The following is a 467-amino-acid chain: H(+)/Cl(-) exchange transporter ClcA (467 aa).

At 1-30 (MTKRERIVKSVLAHVPKDAINQFVSRGSTP) the chain is on the cytoplasmic side. The chain crosses the membrane as a helical span at residues 31-67 (FSVLIMAAIVGTLAGFVGTYFELAVHFVSETRTEWLR). The Periplasmic segment spans residues 68 to 74 (SEIGSVL). Residues 75 to 98 (PLWLAAVLISALLAFIGYFLVHRF) traverse the membrane as a helical segment. A Selectivity filter part_1 motif is present at residues 104 to 108 (GSGIP). Serine 105 is a chloride binding site. The segment at residues 107–114 (IPEIEGAM) is an intramembrane region (helical). Topologically, residues 115 to 121 (DNIRPVR) are cytoplasmic. The next 2 helical transmembrane spans lie at 122 to 139 (WWRV…ALGS) and 146 to 164 (EGPT…TDIF). Positions 144–148 (GREGP) match the Selectivity filter part_2 motif. Over 165–174 (RVKDDDTRHS) the chain is Cytoplasmic. 2 consecutive intramembrane regions (helical) follow at residues 175-187 (LLAS…LAAA) and 191-199 (PLAGIMFVV). At 200-212 (EEMRPQFRYSLIS) the chain is on the cytoplasmic side. The chain crosses the membrane as a helical span at residues 213-230 (IRAVIISAIMANIVFRAI). Residues 231–250 (NGQDAVITMPQYQSPALQTL) lie on the Periplasmic side of the membrane. The chain crosses the membrane as a helical span at residues 251 to 279 (WLFLLLGALFGVFGVIFNKLITVAQDSFV). The Cytoplasmic portion of the chain corresponds to 280–285 (AIHKND). A helical membrane pass occupies residues 286 to 307 (RKRYLITGSILGGVFGLLLLYV). Residues 308–327 (PQLTGGGIALIPDVTTGNYS) lie on the Periplasmic side of the membrane. A run of 2 helical transmembrane segments spans residues 328-347 (ISIL…LCFG) and 353-374 (GIFA…ASAD). The Selectivity filter part_3 motif lies at 353–357 (GIFAP). Residues isoleucine 354 and phenylalanine 355 each contribute to the chloride site. At 375 to 384 (VLLPTLDIEP) the chain is on the periplasmic side. The segment at residues 385–399 (GVFAIAGMGALFAAT) is an intramembrane region (helical). An intramembrane region (note=Loop between two helices) is located at residues 400-402 (VRA). The helical intramembrane region spans 403-414 (PITGILLVIEMT). The segment at residues 415–419 (NNYYL) is an intramembrane region (note=Loop between two helices). The helical transmembrane segment at 420–436 (ILPLIITCLGAVIVAQL) threads the bilayer. Topologically, residues 437-467 (LGGQPIYSQLLHRTLKNDKLRQQDLPENQAS) are cytoplasmic. A chloride-binding site is contributed by tyrosine 443.

It belongs to the chloride channel (TC 2.A.49) family. ClcA subfamily. Homodimer.

The protein localises to the cell inner membrane. The catalysed reaction is 2 chloride(in) + H(+)(out) = 2 chloride(out) + H(+)(in). Its function is as follows. Proton-coupled chloride transporter. Functions as antiport system and exchanges two chloride ions for 1 proton. Probably acts as an electrical shunt for an outwardly-directed proton pump that is linked to amino acid decarboxylation, as part of the extreme acid resistance (XAR) response. This Vibrio parahaemolyticus serotype O3:K6 (strain RIMD 2210633) protein is H(+)/Cl(-) exchange transporter ClcA.